The primary structure comprises 428 residues: Histone deacetylase 3 (428 aa).

The segment at 3–316 (KTVAYFYDPD…WTYETSLLVE (314 aa)) is histone deacetylase. 1D-myo-inositol 1,4,5,6-tetrakisphosphate contacts are provided by His17, Gly21, and Lys25. His135 is a catalytic residue. Positions 170, 172, and 259 each coordinate Zn(2+). A 1D-myo-inositol 1,4,5,6-tetrakisphosphate-binding site is contributed by Arg265. Composition is skewed to basic and acidic residues over residues 388–405 (DRTD…ENYS) and 415–428 (DGDH…DVEI). The tract at residues 388 to 428 (DRTDEADAEERGPEENYSRPEAPNEFYDGDHDNDKESDVEI) is disordered. Residue Ser424 is modified to Phosphoserine.

It belongs to the histone deacetylase family. HD type 1 subfamily. Interacts with HDAC7 and HDAC9. Interacts with DAXX, KDM4A, HDAC10 and DACH1. Found in a complex with NCOR1 and NCOR2. Component of the N-Cor repressor complex, at least composed of NCOR1, NCOR2, HDAC3, TBL1X, TBL1R, CORO2A and GPS2. Interacts with BCOR, MJD2A/JHDM3A, NRIP1, PRDM6 and SRY. Interacts with BTBD14B. Interacts with GLIS2. Interacts (via the DNA-binding domain) with NR2C1; the interaction recruits phosphorylated NR2C1 to PML bodies for sumoylation. Component of the Notch corepressor complex. Interacts with CBFA2T3 and NKAP. Interacts with APEX1; the interaction is not dependent on the acetylated status of APEX1. Interacts with ZMYND15. Interacts with SMRT/NCOR2 and BCL6 on DNA enhancer elements. Interacts with INSM1. Interacts with XBP1 isoform 1; the interaction occurs in endothelial cell (EC) under disturbed flow. Interacts (via C-terminus) with CCAR2 (via N-terminus). Interacts with and deacetylates MEF2D. Interacts with BEND3. Interacts with NKAPL. Interacts with DHX36; this interaction occurs in a RNA-dependent manner. Interacts weakly with CRY1; this interaction is enhanced in the presence of FBXL3. Interacts with FBXL3 and BMAL1. Interacts with NCOR1. Interacts with RARA. Interacts with SETD5. Sumoylated in vitro. Post-translationally, deubiquitinated on 'Lys-63'-linked ubiquitin chains by USP38; leading to a decreased level of histone acetylation.

The protein localises to the nucleus. The protein resides in the chromosome. Its subcellular location is the cytoplasm. It localises to the cytosol. The catalysed reaction is N(6)-acetyl-L-lysyl-[histone] + H2O = L-lysyl-[histone] + acetate. The enzyme catalyses N(6)-acetyl-L-lysyl-[protein] + H2O = L-lysyl-[protein] + acetate. It carries out the reaction N(6)-(2E)-butenoyl-L-lysyl-[protein] + H2O = (2E)-2-butenoate + L-lysyl-[protein]. It catalyses the reaction N(6)-(2-hydroxyisobutanoyl)-L-lysyl-[protein] + H2O = 2-hydroxy-2-methylpropanoate + L-lysyl-[protein]. The catalysed reaction is N(6)-[(S)-lactoyl]-L-lysyl-[protein] + H2O = (S)-lactate + L-lysyl-[protein]. With respect to regulation, inositol tetraphosphate (1D-myo-inositol 1,4,5,6-tetrakisphosphate) promotes the histone deacetylase activity by acting as an intermolecular glue between HDAC3 and NCOR2, thereby promoting its association with the N-Cor complex, a prerequisite for the histone deacetylase activity. Functionally, histone deacetylase that catalyzes the deacetylation of lysine residues on the N-terminal part of the core histones (H2A, H2B, H3 and H4), and some other non-histone substrates. Histone deacetylation gives a tag for epigenetic repression and plays an important role in transcriptional regulation, cell cycle progression and developmental events. Histone deacetylases act via the formation of large multiprotein complexes, such as N-Cor repressor complex, which activate the histone deacetylase activity. Participates in the BCL6 transcriptional repressor activity by deacetylating the H3 'Lys-27' (H3K27) on enhancer elements, antagonizing EP300 acetyltransferase activity and repressing proximal gene expression. Acts as a molecular chaperone for shuttling phosphorylated NR2C1 to PML bodies for sumoylation. Contributes, together with XBP1 isoform 1, to the activation of NFE2L2-mediated HMOX1 transcription factor gene expression in a PI(3)K/mTORC2/Akt-dependent signaling pathway leading to endothelial cell (EC) survival under disturbed flow/oxidative stress. Regulates both the transcriptional activation and repression phases of the circadian clock in a deacetylase activity-independent manner. During the activation phase, promotes the accumulation of ubiquitinated BMAL1 at the E-boxes and during the repression phase, blocks FBXL3-mediated CRY1/2 ubiquitination and promotes the interaction of CRY1 and BMAL1. The NCOR1-HDAC3 complex regulates the circadian expression of the core clock gene BMAL1 and the genes involved in lipid metabolism in the liver. Also functions as deacetylase for non-histone targets, such as KAT5, MEF2D, MAPK14, RARA and STAT3. Serves as a corepressor of RARA, mediating its deacetylation and repression, leading to inhibition of RARE DNA element binding. In addition to protein deacetylase activity, also acts as a protein-lysine deacylase by recognizing other acyl groups: catalyzes removal of (2E)-butenoyl (crotonyl), lactoyl (lactyl) and 2-hydroxyisobutanoyl (2-hydroxyisobutyryl) acyl groups from lysine residues, leading to protein decrotonylation, delactylation and de-2-hydroxyisobutyrylation, respectively. Catalyzes decrotonylation of MAPRE1/EB1. Mediates delactylation NBN/NBS1, thereby inhibiting DNA double-strand breaks (DSBs) via homologous recombination (HR). This is Histone deacetylase 3 from Mus musculus (Mouse).